A 161-amino-acid chain; its full sequence is Putative pre-16S rRNA nuclease (161 aa).

The interval 142 to 161 is disordered; it reads AGSPPGALVPRNRVDPDRHA.

This sequence belongs to the YqgF nuclease family.

Its subcellular location is the cytoplasm. Functionally, could be a nuclease involved in processing of the 5'-end of pre-16S rRNA. The protein is Putative pre-16S rRNA nuclease of Clavibacter sepedonicus (Clavibacter michiganensis subsp. sepedonicus).